The following is a 132-amino-acid chain: Fatty acid-binding protein, intestinal (132 aa).

Residue A2 is modified to N-acetylalanine. 2 residues coordinate hexadecanoate: W83 and R107. Positions 83 and 107 each coordinate tetradecanoate.

Belongs to the calycin superfamily. Fatty-acid binding protein (FABP) family. In terms of tissue distribution, expressed in the small intestine. Highest expression levels in the proximal ileum.

The protein resides in the cytoplasm. In terms of biological role, FABPs are thought to play a role in the intracellular transport of long-chain fatty acids and their acyl-CoA esters. FABP2 is probably involved in triglyceride-rich lipoprotein synthesis. Binds saturated long-chain fatty acids with a high affinity, but binds with a lower affinity to unsaturated long-chain fatty acids. FABP2 may also help maintain energy homeostasis by functioning as a lipid sensor. In Mus musculus (Mouse), this protein is Fatty acid-binding protein, intestinal (Fabp2).